Consider the following 350-residue polypeptide: UDP-3-O-acylglucosamine N-acyltransferase (350 aa).

Histidine 257 functions as the Proton acceptor in the catalytic mechanism.

This sequence belongs to the transferase hexapeptide repeat family. LpxD subfamily. As to quaternary structure, homotrimer.

The catalysed reaction is a UDP-3-O-[(3R)-3-hydroxyacyl]-alpha-D-glucosamine + a (3R)-hydroxyacyl-[ACP] = a UDP-2-N,3-O-bis[(3R)-3-hydroxyacyl]-alpha-D-glucosamine + holo-[ACP] + H(+). It participates in bacterial outer membrane biogenesis; LPS lipid A biosynthesis. Functionally, catalyzes the N-acylation of UDP-3-O-acylglucosamine using 3-hydroxyacyl-ACP as the acyl donor. Is involved in the biosynthesis of lipid A, a phosphorylated glycolipid that anchors the lipopolysaccharide to the outer membrane of the cell. The sequence is that of UDP-3-O-acylglucosamine N-acyltransferase from Chelativorans sp. (strain BNC1).